Consider the following 237-residue polypeptide: Ly6/PLAUR domain-containing protein 8 (237 aa).

Residues 1 to 19 form the signal peptide; the sequence is MKGILVAGITAVLVAAVES. Residues Asn45, Asn73, Asn107, Asn118, Asn132, Asn172, Asn175, and Asn185 are each glycosylated (N-linked (GlcNAc...) asparagine). A UPAR/Ly6 domain is found at 125-176; sequence CPACYESNGTSCHGKPWKCYEEEQCVFLVAELKNDIESKSLVLKGCSNVSNA. Asn215 carries GPI-anchor amidated asparagine lipidation. A propeptide spans 216–237 (removed in mature form); it reads VGSKASLYLLALASLLLRGLLP.

This sequence belongs to the CNF-like-inhibitor family. In terms of processing, highly N-glycosylated. Not O-glycosylated. Post-translationally, GPI-anchored. The GPI-anchor is cleaved, leading to secretion into the colonic lumen. Expressed in the large intestine. Preferentially expressed on the epithelial layer exposed to the lumen (at protein level).

The protein resides in the cell membrane. The protein localises to the secreted. Its function is as follows. Secreted protein specifically required to prevent invasion of Gram-negative bacteria in the inner mucus layer of the colon epithelium, a portion of the large intestine which is free of commensal microbiota. Prevents invasion of flagellated microbiota by binding to the flagellum of bacteria, such as P.mirabilis, thereby inhibiting bacterial motility in the intestinal lumen. Segregation of intestinal bacteria and epithelial cells in the colon is required to preserve intestinal homeostasis. This is Ly6/PLAUR domain-containing protein 8 from Homo sapiens (Human).